The sequence spans 712 residues: Anaerobic ribonucleoside-triphosphate reductase (712 aa).

One can recognise an ATP-cone domain in the interval 3–92; it reads PHVMKRDGCK…EYRHDRDIQR (90 aa). One can recognise a Glycine radical domain in the interval 583–708; the sequence is KKVNPYDKID…VKRRVKHLGN (126 aa). Residues cysteine 644, cysteine 647, cysteine 662, and cysteine 665 each coordinate Zn(2+). Position 681 is a glycine radical (glycine 681).

Belongs to the anaerobic ribonucleoside-triphosphate reductase family. Forms a tetramer composed of two NrdD and two NrdG subunits.

It catalyses the reaction a ribonucleoside 5'-triphosphate + formate + H(+) = a 2'-deoxyribonucleoside 5'-triphosphate + CO2 + H2O. With respect to regulation, activated under anaerobic conditions by NrdG, a tightly associated activase. Activation involves the formation of a glycyl radical at Gly-681. Its function is as follows. Catalyzes the conversion of ribonucleotides into deoxyribonucleotides, which are required for DNA synthesis and repair. This chain is Anaerobic ribonucleoside-triphosphate reductase (nrdD), found in Salmonella typhimurium (strain LT2 / SGSC1412 / ATCC 700720).